The primary structure comprises 875 residues: MSEPKPIQDTLDRRHSRESSISSASTTSLVFDRLAEESEKNHDASSRPHPSAARHAYTDDNSDAIKESDINDPETGPFLGASSETTPPRKGVDRKLKKVLLIVGGFFVAAWIVSLVVFLTNKSYKHGSQIDHDPAATNRKSGKRVTLDQVQSGFWRPTSHTFSWIPGPDGEDGLLLEQEARGKHFLVVEDVRSQGSADGEAHPDAAESRTLIKDPWFYWGDQQHSILQTWPSKNQKKVLVATQKQRNWRHSFTALYWVFDVESQSAEPLDPAHPEERVQLATWNAQSDAIVFTRSNNLFLRKLADDKVTPITTDGGPEYFYGIPDWVYEEEVFSGNSATWWSADGKHVAFLRTNETEVPEYPIQYFVSRPSGAEPEVGEENYPEVRQIKYPKVGSPNPVVDLLFYDVEKGDVFTVDIDGDFPEKDKLINFVMWADGNVLVKTTNRVSDVLQVNLIDIVARTGKTVQHVDVAKIDGGWFEISHVMYIPADPKNGRPHDGYVDTVIHNDGDHLAYFTPMDNPKPVYITEGPGWEVDGSASAVDLKNNLVYFRSTKESSIQRHIYSVHLNGTDMKPFTDTTHESYYDVSFSSGAGFGLLSYQGPKVPWQKVVSTPSNPKSYERIIEENKDLTQQAKKHELPVLEYGTIKVDDVELNYVERRPPHFDKNKKYPVLFQQYSGPGSQTVTKKFAVDFQSSDGGRRTTRSPRRATGRPSATSTPTAFAIWGWSYGGFATLKTLETDAGRTFRYGMAVAPVTDWRFYDSIYTERYMRTPDLNRNGYQQTAISNTTALGANERFLVMHGVADDNVHMQNTLTLLDELDLAGVENYDVHVFPDSDHSIYFHNANRIVYDKLSNWLINAFNGEWVKVNDAKPKIES.

The segment at 1–90 (MSEPKPIQDT…ASSETTPPRK (90 aa)) is disordered. The Cytoplasmic segment spans residues 1 to 98 (MSEPKPIQDT…RKGVDRKLKK (98 aa)). Over residues 19–28 (SSISSASTTS) the composition is skewed to low complexity. The span at 33–46 (RLAEESEKNHDASS) shows a compositional bias: basic and acidic residues. The helical; Signal-anchor for type II membrane protein transmembrane segment at 99–119 (VLLIVGGFFVAAWIVSLVVFL) threads the bilayer. The Vacuolar portion of the chain corresponds to 120–875 (TNKSYKHGSQ…VNDAKPKIES (756 aa)). N354 and N567 each carry an N-linked (GlcNAc...) asparagine glycan. Positions 689 to 715 (VDFQSSDGGRRTTRSPRRATGRPSATS) are disordered. Positions 699-708 (RTTRSPRRAT) are enriched in basic residues. S726 (charge relay system) is an active-site residue. A glycan (N-linked (GlcNAc...) asparagine) is linked at N785. Active-site charge relay system residues include D803 and H836.

Belongs to the peptidase S9B family.

The protein resides in the vacuole membrane. The enzyme catalyses Release of an N-terminal dipeptide, Xaa-Yaa-|-Zaa-, from a polypeptide, preferentially when Yaa is Pro, provided Zaa is neither Pro nor hydroxyproline.. Its function is as follows. Type IV dipeptidyl-peptidase which removes N-terminal dipeptides sequentially from polypeptides having unsubstituted N-termini provided that the penultimate residue is proline. The sequence is that of Probable dipeptidyl-aminopeptidase B (DAPB) from Verticillium alfalfae (strain VaMs.102 / ATCC MYA-4576 / FGSC 10136) (Verticillium wilt of alfalfa).